We begin with the raw amino-acid sequence, 482 residues long: Methylenetetrahydrofolate--tRNA-(uracil-5-)-methyltransferase TrmFO (482 aa).

FAD is bound at residue 20–25 (GGGLAG).

This sequence belongs to the MnmG family. TrmFO subfamily. FAD serves as cofactor.

It localises to the cytoplasm. The catalysed reaction is uridine(54) in tRNA + (6R)-5,10-methylene-5,6,7,8-tetrahydrofolate + NADH + H(+) = 5-methyluridine(54) in tRNA + (6S)-5,6,7,8-tetrahydrofolate + NAD(+). It catalyses the reaction uridine(54) in tRNA + (6R)-5,10-methylene-5,6,7,8-tetrahydrofolate + NADPH + H(+) = 5-methyluridine(54) in tRNA + (6S)-5,6,7,8-tetrahydrofolate + NADP(+). Functionally, catalyzes the folate-dependent formation of 5-methyl-uridine at position 54 (M-5-U54) in all tRNAs. This chain is Methylenetetrahydrofolate--tRNA-(uracil-5-)-methyltransferase TrmFO, found in Rhodopseudomonas palustris (strain HaA2).